The sequence spans 61 residues: Overexpressed in colon carcinoma 1 protein homolog (61 aa).

A compositionally biased stretch (polar residues) spans 1-13; it reads MGCGNSTAASTTP. The segment at 1–61 is disordered; that stretch reads MGCGNSTAAS…AGQTASTHKE (61 aa). A compositionally biased stretch (basic and acidic residues) spans 18-34; it reads SAKDVQDDSSMDEEKRR. Residues 48 to 61 show a composition bias toward polar residues; that stretch reads TNETAGQTASTHKE.

The protein belongs to the OCC1 family.

This is Overexpressed in colon carcinoma 1 protein homolog (si:dkey-261e22.4) from Danio rerio (Zebrafish).